The primary structure comprises 614 residues: Chaperone protein DnaK (614 aa).

Residue Thr-175 is modified to Phosphothreonine; by autocatalysis. The interval Gln-577 to Lys-614 is disordered. Positions Gly-583–Ala-597 are enriched in low complexity. Positions Pro-598–Lys-614 are enriched in basic and acidic residues.

This sequence belongs to the heat shock protein 70 family.

Functionally, acts as a chaperone. The sequence is that of Chaperone protein DnaK from Clostridium beijerinckii (strain ATCC 51743 / NCIMB 8052) (Clostridium acetobutylicum).